A 239-amino-acid chain; its full sequence is Cysteine-rich venom protein kaouthin-1 (239 aa).

An N-terminal signal peptide occupies residues M1–G18. An SCP domain is found at V37–Y165. Disulfide bonds link C74/C152, C91/C166, C147/C163, C185/C192, C188/C197, C201/C234, C210/C228, and C219/C232. The ShKT domain maps to C201–C234.

It belongs to the CRISP family. In terms of tissue distribution, expressed by the venom gland.

It is found in the secreted. Its function is as follows. Inhibits calcium-activated potassium channels (KCa), voltage-gated potassium channel (Kv), and the calcium release channel/ryanodine receptor (RyR). The protein is Cysteine-rich venom protein kaouthin-1 of Naja kaouthia (Monocled cobra).